Here is a 272-residue protein sequence, read N- to C-terminus: Regulatory protein RecX (272 aa).

The protein belongs to the RecX family.

It is found in the cytoplasm. Its function is as follows. Modulates RecA activity. The sequence is that of Regulatory protein RecX from Staphylococcus saprophyticus subsp. saprophyticus (strain ATCC 15305 / DSM 20229 / NCIMB 8711 / NCTC 7292 / S-41).